The chain runs to 301 residues: Protoheme IX farnesyltransferase (301 aa).

8 helical membrane passes run 25 to 45 (VTQLAVFCAVIGMFLSTPGMV), 47 to 67 (WTPLIGGTVGIWLLAGAAFAI), 97 to 117 (ILLFSAVLGGLGMWTLYTFAN), 119 to 139 (LTMWLTLATFVGYAVIYTLLL), 147 to 167 (IVIGGASGAMPPALGWAAVTG), 173 to 193 (AWILVLIIFVWTPPHFWALAL), 235 to 255 (FISGMSGVVYLAAAVLLGALF), and 279 to 299 (IVYLSLLFAALLIDHYARVLI).

It belongs to the UbiA prenyltransferase family. Protoheme IX farnesyltransferase subfamily.

It localises to the cell inner membrane. It carries out the reaction heme b + (2E,6E)-farnesyl diphosphate + H2O = Fe(II)-heme o + diphosphate. The protein operates within porphyrin-containing compound metabolism; heme O biosynthesis; heme O from protoheme: step 1/1. Functionally, converts heme B (protoheme IX) to heme O by substitution of the vinyl group on carbon 2 of heme B porphyrin ring with a hydroxyethyl farnesyl side group. This Paraburkholderia xenovorans (strain LB400) protein is Protoheme IX farnesyltransferase.